The following is a 303-amino-acid chain: Cilia- and flagella-associated protein 161 (303 aa).

As to quaternary structure, microtubule inner protein component of sperm flagellar doublet microtubules.

The protein resides in the cytoplasm. It localises to the cytoskeleton. The protein localises to the cilium axoneme. Its subcellular location is the flagellum axoneme. Functionally, microtubule inner protein (MIP) part of the dynein-decorated doublet microtubules (DMTs) in cilia axoneme, which is required for motile cilia beating. The sequence is that of Cilia- and flagella-associated protein 161 from Mus musculus (Mouse).